The sequence spans 81 residues: Large ribosomal subunit protein bL31B (81 aa).

This sequence belongs to the bacterial ribosomal protein bL31 family. Type B subfamily. In terms of assembly, part of the 50S ribosomal subunit.

In Oceanobacillus iheyensis (strain DSM 14371 / CIP 107618 / JCM 11309 / KCTC 3954 / HTE831), this protein is Large ribosomal subunit protein bL31B.